The following is a 794-amino-acid chain: Ent-copalyl diphosphate synthase 2 (794 aa).

The transit peptide at 1 to 35 directs the protein to the chloroplast; the sequence is MSSSSNVTSLPRLTTAGGVFPREMVRVHSSCNILR. Substrate is bound at residue Lys238. Mg(2+)-binding residues include Asp369 and Asp371. A DXDD motif motif is present at residues 369–372; it reads DVDD. Lys455 is a substrate binding site.

Belongs to the terpene synthase family. Tpsc subfamily. Mg(2+) is required as a cofactor. Expressed in leaves.

It localises to the plastid. The protein localises to the chloroplast. The catalysed reaction is (2E,6E,10E)-geranylgeranyl diphosphate = ent-copalyl diphosphate. It participates in secondary metabolite biosynthesis; terpenoid biosynthesis. Functionally, involved in the biosynthesis of ent-kaurene diterpenoids natural products such as oridonin, miltiradiene, eriocalyxin B and nezukol, known to exhibit antitumor, anti-inflammatory and antibacterial activities. Catalyzes the conversion of (2E,6E,10E)-geranylgeranyl diphosphate (GGPP) to ent-copalyl diphosphate (ent-CPP). The chain is Ent-copalyl diphosphate synthase 2 from Isodon eriocalyx (Plectranthus eriocalyx).